We begin with the raw amino-acid sequence, 827 residues long: uncharacterized protein (827 aa).

The region spanning 12-82 (FDADFEAILN…DMDIGVLSTG (71 aa)) is the PAS 1 domain. In terms of domain architecture, PAC 1 spans 212 to 264 (LDVEFRLAAAEGGYSWYRSRAATRRAEDGSILRWYGTVEDIDDRRKMFEALKE). One can recognise a PAS 2 domain in the interval 265–335 (SEARFRAIAD…RVFYQAFDLR (71 aa)). The region spanning 338 to 390 (VRMEYRLKRAGGGSAWVIDIGQPRFASDGTFLGFVGIALDITERRNAEQERLL) is the PAC 2 domain. Residues 428 to 561 (TRLAILCLDL…GGGTIVQYEP (134 aa)) form the GGDEF domain. Positions 570-820 (RQRMKVSLRH…QAMALLKSRS (251 aa)) constitute an EAL domain.

This is an uncharacterized protein from Sinorhizobium fredii (strain NBRC 101917 / NGR234).